The chain runs to 113 residues: Ribulose bisphosphate carboxylase small subunit (113 aa).

It belongs to the RuBisCO small chain family. Heterohexadecamer of 8 large and 8 small subunits. Forms a CsoS2-CsoS1-RuBisCO complex.

It is found in the carboxysome. RuBisCO catalyzes two reactions: the carboxylation of D-ribulose 1,5-bisphosphate, the primary event in carbon dioxide fixation, as well as the oxidative fragmentation of the pentose substrate in the photorespiration process. Both reactions occur simultaneously and in competition at the same active site. Although the small subunit is not catalytic it is essential for maximal activity. The sequence is that of Ribulose bisphosphate carboxylase small subunit from Prochlorococcus marinus (strain MIT 9313).